A 405-amino-acid chain; its full sequence is UDP-N-acetylglucosamine--N-acetylmuramyl-(pentapeptide) pyrophosphoryl-undecaprenol N-acetylglucosamine transferase (405 aa).

UDP-N-acetyl-alpha-D-glucosamine is bound by residues 11–13 (TGG), asparagine 127, arginine 168, serine 191, isoleucine 248, and glutamine 293.

Belongs to the glycosyltransferase 28 family. MurG subfamily.

It localises to the cell inner membrane. The enzyme catalyses di-trans,octa-cis-undecaprenyl diphospho-N-acetyl-alpha-D-muramoyl-L-alanyl-D-glutamyl-meso-2,6-diaminopimeloyl-D-alanyl-D-alanine + UDP-N-acetyl-alpha-D-glucosamine = di-trans,octa-cis-undecaprenyl diphospho-[N-acetyl-alpha-D-glucosaminyl-(1-&gt;4)]-N-acetyl-alpha-D-muramoyl-L-alanyl-D-glutamyl-meso-2,6-diaminopimeloyl-D-alanyl-D-alanine + UDP + H(+). Its pathway is cell wall biogenesis; peptidoglycan biosynthesis. In terms of biological role, cell wall formation. Catalyzes the transfer of a GlcNAc subunit on undecaprenyl-pyrophosphoryl-MurNAc-pentapeptide (lipid intermediate I) to form undecaprenyl-pyrophosphoryl-MurNAc-(pentapeptide)GlcNAc (lipid intermediate II). The protein is UDP-N-acetylglucosamine--N-acetylmuramyl-(pentapeptide) pyrophosphoryl-undecaprenol N-acetylglucosamine transferase of Sorangium cellulosum (strain So ce56) (Polyangium cellulosum (strain So ce56)).